A 388-amino-acid polypeptide reads, in one-letter code: Biotin synthase (388 aa).

The 231-residue stretch at 47 to 277 folds into the Radical SAM core domain; that stretch reads WFGRRVKLNY…DVEVRIAGGR (231 aa). Residues cysteine 65, cysteine 69, and cysteine 72 each coordinate [4Fe-4S] cluster. Residues cysteine 109, cysteine 142, cysteine 202, and arginine 272 each contribute to the [2Fe-2S] cluster site. The tract at residues 335 to 371 is disordered; it reads APAGGCGSEQSAGCGSHEGGGACGSAPAPRTDEARTD.

The protein belongs to the radical SAM superfamily. Biotin synthase family. As to quaternary structure, homodimer. [4Fe-4S] cluster serves as cofactor. Requires [2Fe-2S] cluster as cofactor.

It catalyses the reaction (4R,5S)-dethiobiotin + (sulfur carrier)-SH + 2 reduced [2Fe-2S]-[ferredoxin] + 2 S-adenosyl-L-methionine = (sulfur carrier)-H + biotin + 2 5'-deoxyadenosine + 2 L-methionine + 2 oxidized [2Fe-2S]-[ferredoxin]. It participates in cofactor biosynthesis; biotin biosynthesis; biotin from 7,8-diaminononanoate: step 2/2. In terms of biological role, catalyzes the conversion of dethiobiotin (DTB) to biotin by the insertion of a sulfur atom into dethiobiotin via a radical-based mechanism. The chain is Biotin synthase from Streptomyces avermitilis (strain ATCC 31267 / DSM 46492 / JCM 5070 / NBRC 14893 / NCIMB 12804 / NRRL 8165 / MA-4680).